A 155-amino-acid chain; its full sequence is Glycosylation-dependent cell adhesion molecule 1 (155 aa).

Positions 1 to 18 (MKFFAVLLLASLAATSLA) are cleaved as a signal peptide. A glycan (O-linked (GalNAc...) threonine) is linked at threonine 34. Serine 48, serine 53, serine 57, serine 59, and serine 65 each carry phosphoserine. The tract at residues 74-109 (ARRHQNQNPKLLHPVPQESSFRNTATQSEETKELTP) is disordered. A compositionally biased stretch (polar residues) spans 90-101 (QESSFRNTATQS).

The protein belongs to the PP3/GlyCAM-1 family. In terms of tissue distribution, highly expressed in whey fraction of camel milk.

This Camelus dromedarius (Dromedary) protein is Glycosylation-dependent cell adhesion molecule 1 (GLYCAM1).